The primary structure comprises 465 residues: Probable Xaa-Pro aminopeptidase pepP (465 aa).

Asp263, Asp274, Glu397, and Glu437 together coordinate Mn(2+).

This sequence belongs to the peptidase M24B family. It depends on Mn(2+) as a cofactor.

It carries out the reaction Release of any N-terminal amino acid, including proline, that is linked to proline, even from a dipeptide or tripeptide.. Its function is as follows. Catalyzes the removal of a penultimate prolyl residue from the N-termini of peptides. In Emericella nidulans (strain FGSC A4 / ATCC 38163 / CBS 112.46 / NRRL 194 / M139) (Aspergillus nidulans), this protein is Probable Xaa-Pro aminopeptidase pepP (pepP).